The chain runs to 59 residues: U-myrmeciitoxin(01)-Mg5b (59 aa).

An N-terminal signal peptide occupies residues 1–21 (MRLSYLSLALAIIFVLTIMHA). The propeptide occupies 22–38 (SNVEAKASADPEPDAVG).

As to expression, expressed by the venom gland.

It is found in the secreted. Its function is as follows. May have antimicrobial properties, like most ant linear peptides. This is U-myrmeciitoxin(01)-Mg5b from Myrmecia gulosa (Red bulldog ant).